The chain runs to 776 residues: Glutathione biosynthesis bifunctional protein GshAB (776 aa).

Residues 1 to 354 form a glutamate--cysteine ligase region; that stretch reads MIKLDMTILD…QLADENENNI (354 aa). The region spanning 521 to 775 is the ATP-grasp domain; it reads KLVLAENNIR…IGDKILDFLF (255 aa). Residue 548–606 coordinates ATP; that stretch reads SLFKDKQIVVKPKSTNYGWGISIFKNKFTTEDYQEALNIAFSYDSSVIIEEFIPGDEFR. Mg(2+) contacts are provided by Asp-728, Glu-745, and Asn-747. 3 residues coordinate Mn(2+): Asp-728, Glu-745, and Asn-747.

The protein in the N-terminal section; belongs to the glutamate--cysteine ligase type 1 family. Type 2 subfamily. In terms of assembly, monomer. The cofactor is Mg(2+). Mn(2+) is required as a cofactor.

It carries out the reaction L-cysteine + L-glutamate + ATP = gamma-L-glutamyl-L-cysteine + ADP + phosphate + H(+). It catalyses the reaction gamma-L-glutamyl-L-cysteine + glycine + ATP = glutathione + ADP + phosphate + H(+). Its pathway is sulfur metabolism; glutathione biosynthesis; glutathione from L-cysteine and L-glutamate: step 1/2. It functions in the pathway sulfur metabolism; glutathione biosynthesis; glutathione from L-cysteine and L-glutamate: step 2/2. In terms of biological role, synthesizes glutathione from L-glutamate and L-cysteine via gamma-L-glutamyl-L-cysteine. This is Glutathione biosynthesis bifunctional protein GshAB from Listeria welshimeri serovar 6b (strain ATCC 35897 / DSM 20650 / CCUG 15529 / CIP 8149 / NCTC 11857 / SLCC 5334 / V8).